A 255-amino-acid polypeptide reads, in one-letter code: Probable iron chelatin transport ATP-binding protein jhp_0821 (255 aa).

The ABC transporter domain occupies 3-240; it reads LEVKNLSFKY…HNLSALYDTP (238 aa). 35–42 contributes to the ATP binding site; it reads APNGSGKT.

This sequence belongs to the ABC transporter superfamily.

It localises to the cell inner membrane. Its function is as follows. Part of a binding-protein-dependent transport system for an iron chelatin. Probably responsible for energy coupling to the transport system (Potential). This is Probable iron chelatin transport ATP-binding protein jhp_0821 from Helicobacter pylori (strain J99 / ATCC 700824) (Campylobacter pylori J99).